The following is a 146-amino-acid chain: 3-dehydroquinate dehydratase (146 aa).

The Proton acceptor role is filled by Y22. Positions 73, 79, and 86 each coordinate substrate. The Proton donor role is filled by H101. Residues 102-103 (IS) and R112 contribute to the substrate site.

Belongs to the type-II 3-dehydroquinase family. In terms of assembly, homododecamer.

The enzyme catalyses 3-dehydroquinate = 3-dehydroshikimate + H2O. It functions in the pathway metabolic intermediate biosynthesis; chorismate biosynthesis; chorismate from D-erythrose 4-phosphate and phosphoenolpyruvate: step 3/7. In terms of biological role, catalyzes a trans-dehydration via an enolate intermediate. This Corynebacterium pseudotuberculosis (strain C231) protein is 3-dehydroquinate dehydratase (aroQ).